The primary structure comprises 314 residues: tRNA dimethylallyltransferase (314 aa).

12–19 is an ATP binding site; the sequence is GPTASGKT. 14–19 is a binding site for substrate; the sequence is TASGKT. Interaction with substrate tRNA regions lie at residues 37–40 and 161–165; these read DSAQ and QRIQR.

The protein belongs to the IPP transferase family. In terms of assembly, monomer. Requires Mg(2+) as cofactor.

It catalyses the reaction adenosine(37) in tRNA + dimethylallyl diphosphate = N(6)-dimethylallyladenosine(37) in tRNA + diphosphate. In terms of biological role, catalyzes the transfer of a dimethylallyl group onto the adenine at position 37 in tRNAs that read codons beginning with uridine, leading to the formation of N6-(dimethylallyl)adenosine (i(6)A). This Nitrosococcus oceani (strain ATCC 19707 / BCRC 17464 / JCM 30415 / NCIMB 11848 / C-107) protein is tRNA dimethylallyltransferase.